The chain runs to 371 residues: Cytochrome b (371 aa).

The next 4 helical transmembrane spans lie at 25 to 45 (FGSM…FLAV), 69 to 90 (WMMQ…YIHI), 105 to 125 (WLSG…GYVL), and 170 to 190 (FFAL…LHIM). Heme b contacts are provided by His75 and His89. Residues His174 and His188 each contribute to the heme b site. A ubiquinone is bound at residue His193. 4 consecutive transmembrane segments (helical) span residues 218-238 (YKDL…VSFL), 280-300 (LGGA…PFTH), 312-332 (IMQL…WAAT), and 339-358 (FTMI…IMNP).

This sequence belongs to the cytochrome b family. The cytochrome bc1 complex contains 3 respiratory subunits (MT-CYB, CYC1 and UQCRFS1), 2 core proteins (UQCRC1 and UQCRC2) and probably 6 low-molecular weight proteins. Heme b serves as cofactor.

Its subcellular location is the mitochondrion inner membrane. In terms of biological role, component of the ubiquinol-cytochrome c reductase complex (complex III or cytochrome b-c1 complex) that is part of the mitochondrial respiratory chain. The b-c1 complex mediates electron transfer from ubiquinol to cytochrome c. Contributes to the generation of a proton gradient across the mitochondrial membrane that is then used for ATP synthesis. The chain is Cytochrome b (MT-CYB) from Eryx miliaris (Desert sand boa).